A 280-amino-acid polypeptide reads, in one-letter code: Lacto-N-neotetraose biosynthesis glycosyltransferase LgtE (280 aa).

This sequence belongs to the glycosyltransferase 25 family.

The protein operates within glycan metabolism; lacto-N-neotetraose biosynthesis. It participates in bacterial outer membrane biogenesis; lipooligosaccharide biosynthesis. Adds the first galactose to the lacto-N-tetraose chain in lipooligosaccharide (LOS). The polypeptide is Lacto-N-neotetraose biosynthesis glycosyltransferase LgtE (lgtE) (Neisseria meningitidis serogroup B (strain ATCC BAA-335 / MC58)).